Reading from the N-terminus, the 364-residue chain is Caffeic acid 3-O-methyltransferase 3 (364 aa).

Residue methionine 129–leucine 135 coordinates substrate. Residues alanine 161–methionine 179 are substrate binding. S-adenosyl-L-methionine contacts are provided by glycine 207, aspartate 230, aspartate 250, methionine 251, and lysine 264. Histidine 268 serves as the catalytic Proton acceptor.

It belongs to the class I-like SAM-binding methyltransferase superfamily. Cation-independent O-methyltransferase family. COMT subfamily. In terms of assembly, homodimer.

It carries out the reaction (E)-caffeate + S-adenosyl-L-methionine = (E)-ferulate + S-adenosyl-L-homocysteine + H(+). The protein operates within aromatic compound metabolism; phenylpropanoid biosynthesis. Its function is as follows. Catalyzes the conversion of caffeic acid to ferulic acid and of 5-hydroxyferulic acid to sinapic acid. The resulting products may subsequently be converted to the corresponding alcohols that are incorporated into lignins. The chain is Caffeic acid 3-O-methyltransferase 3 (HOMT3) from Populus kitakamiensis (Aspen).